The following is a 344-amino-acid chain: MNVIGIESSCDDTAIAIVNSNREIIANVVISQYTEHLPYSGVVPEIAARAHLKNLQYAMKETLNQAKINFTDIDVIAATSGPGLIGGIIVGSVFGQAIACALGKDFIAVNHLEGHILAVRLNENISFPYLVLLVSGGHCQFIAVLGVGKYKILGQTIDDAVGEAFDKTARLLKLGYPGGPIIEKLASKGDPHKYSLPLSMTKKSGCDLSFSGLKTAVKQLIFSIESLSEKVICDICASFQYTVVQILLCRSINAIKLFESYCSNNFKINRKNYFVISGGVAANQYLRQEIFNLANTYGYCGVAPPSNLCTDNAAMIAWAGIERLNANLFSSNFVPRAKWSVEEL.

Fe cation-binding residues include His111 and His115. Substrate is bound by residues 133 to 137 (LVSGG), Asp166, Gly179, and Asn283. Asp311 provides a ligand contact to Fe cation.

It belongs to the KAE1 / TsaD family. It depends on Fe(2+) as a cofactor.

The protein resides in the cytoplasm. The catalysed reaction is L-threonylcarbamoyladenylate + adenosine(37) in tRNA = N(6)-L-threonylcarbamoyladenosine(37) in tRNA + AMP + H(+). Functionally, required for the formation of a threonylcarbamoyl group on adenosine at position 37 (t(6)A37) in tRNAs that read codons beginning with adenine. Is involved in the transfer of the threonylcarbamoyl moiety of threonylcarbamoyl-AMP (TC-AMP) to the N6 group of A37, together with TsaE and TsaB. TsaD likely plays a direct catalytic role in this reaction. The polypeptide is tRNA N6-adenosine threonylcarbamoyltransferase (Orientia tsutsugamushi (strain Boryong) (Rickettsia tsutsugamushi)).